A 170-amino-acid chain; its full sequence is Photosystem I assembly protein Ycf3 (170 aa).

3 TPR repeats span residues A35–P68, S72–L105, and G120–N153.

Belongs to the Ycf3 family.

The protein localises to the plastid. It is found in the chloroplast thylakoid membrane. Essential for the assembly of the photosystem I (PSI) complex. May act as a chaperone-like factor to guide the assembly of the PSI subunits. The polypeptide is Photosystem I assembly protein Ycf3 (Oryza sativa (Rice)).